Here is a 115-residue protein sequence, read N- to C-terminus: Parathyroid hormone (115 aa).

An N-terminal signal peptide occupies residues Met1–Gly25. The propeptide occupies Lys26–Arg31. Residues Arg51–Gly69 form an important for receptor binding region. Residues Leu72–Lys96 form a disordered region. Over residues Lys84–Lys96 the composition is skewed to basic and acidic residues.

It belongs to the parathyroid hormone family. In terms of assembly, interacts with PTH1R (via N-terminal extracellular domain).

Its subcellular location is the secreted. In terms of biological role, parathyroid hormone elevates calcium level by dissolving the salts in bone and preventing their renal excretion. Acts by binding to its receptor, PTH1R, activating G protein-coupled receptor signaling. Stimulates [1-14C]-2-deoxy-D-glucose (2DG) transport and glycogen synthesis in osteoblastic cells. The sequence is that of Parathyroid hormone (PTH) from Macaca fascicularis (Crab-eating macaque).